The following is a 511-amino-acid chain: Bifunctional purine biosynthesis protein PurH (511 aa).

An MGS-like domain is found at 1–145; the sequence is MKKRALVSVS…KNHQFVSVIV (145 aa).

It belongs to the PurH family.

The catalysed reaction is (6R)-10-formyltetrahydrofolate + 5-amino-1-(5-phospho-beta-D-ribosyl)imidazole-4-carboxamide = 5-formamido-1-(5-phospho-D-ribosyl)imidazole-4-carboxamide + (6S)-5,6,7,8-tetrahydrofolate. The enzyme catalyses IMP + H2O = 5-formamido-1-(5-phospho-D-ribosyl)imidazole-4-carboxamide. It functions in the pathway purine metabolism; IMP biosynthesis via de novo pathway; 5-formamido-1-(5-phospho-D-ribosyl)imidazole-4-carboxamide from 5-amino-1-(5-phospho-D-ribosyl)imidazole-4-carboxamide (10-formyl THF route): step 1/1. It participates in purine metabolism; IMP biosynthesis via de novo pathway; IMP from 5-formamido-1-(5-phospho-D-ribosyl)imidazole-4-carboxamide: step 1/1. The polypeptide is Bifunctional purine biosynthesis protein PurH (Bacillus cereus (strain G9842)).